The following is a 220-amino-acid chain: GTP-binding protein YPT53 (220 aa).

GTP is bound by residues 19 to 26 (GESAVGKS), 67 to 71 (DTAGQ), and 125 to 128 (NKMD). Residues Cys218 and Cys220 are each lipidated (S-geranylgeranyl cysteine). Cys220 is modified (cysteine methyl ester).

The protein belongs to the small GTPase superfamily. Rab family.

Its subcellular location is the cell membrane. Functionally, required for transport in the endocytic pathway and for correct sorting of the vacuolar hydrolases suggesting a possible intersection of the endocytic with the vacuolar sorting pathway. May be involved in recruiting the MON1-CCZ1 complex to membranes enriched in phosphatidylinositol 3-phosphate (PtdIns[3]P) or other charged lipids, leading to recruitment of YPT7. The chain is GTP-binding protein YPT53 (YPT53) from Saccharomyces cerevisiae (strain ATCC 204508 / S288c) (Baker's yeast).